The following is a 392-amino-acid chain: 2-oxoisovalerate dehydrogenase subunit beta, mitochondrial (392 aa).

The transit peptide at 1–50 (MAAVAAFAGWLLRLRAAGADGPWRRLCGAGLSRGFLQSASAYGAAAQRRQ) directs the protein to the mitochondrion. Y152 serves as a coordination point for thiamine diphosphate. Residues G178, L180, T181, C228, and D231 each coordinate K(+). K232 is modified (N6-acetyllysine). A K(+)-binding site is contributed by N233. At K241 the chain carries N6-acetyllysine.

In terms of assembly, heterotetramer of 2 alpha/BCKDHA and 2 beta chains/BCKDHB that forms the branched-chain alpha-keto acid decarboxylase (E1) component of the BCKD complex. The branched-chain alpha-ketoacid dehydrogenase is a large complex composed of three major building blocks E1, E2 and E3. It is organized around E2, a 24-meric cubic core composed of DBT, to which are associated 6 to 12 copies of E1, and approximately 6 copies of the dehydrogenase E3, a DLD dimer. Thiamine diphosphate serves as cofactor.

Its subcellular location is the mitochondrion matrix. It catalyses the reaction N(6)-[(R)-lipoyl]-L-lysyl-[protein] + 3-methyl-2-oxobutanoate + H(+) = N(6)-[(R)-S(8)-2-methylpropanoyldihydrolipoyl]-L-lysyl-[protein] + CO2. In terms of biological role, together with BCKDHA forms the heterotetrameric E1 subunit of the mitochondrial branched-chain alpha-ketoacid dehydrogenase (BCKD) complex. The BCKD complex catalyzes the multi-step oxidative decarboxylation of alpha-ketoacids derived from the branched-chain amino-acids valine, leucine and isoleucine producing CO2 and acyl-CoA which is subsequently utilized to produce energy. The E1 subunit catalyzes the first step with the decarboxylation of the alpha-ketoacid forming an enzyme-product intermediate. A reductive acylation mediated by the lipoylamide cofactor of E2 extracts the acyl group from the E1 active site for the next step of the reaction. The polypeptide is 2-oxoisovalerate dehydrogenase subunit beta, mitochondrial (BCKDHB) (Bos taurus (Bovine)).